A 580-amino-acid polypeptide reads, in one-letter code: CRISPR-associated exonuclease Cas4/endonuclease Cas1 fusion (580 aa).

The interval 1–223 (MAPSDTPPSA…RCSLLPICLP (223 aa)) is CRISPR-associated exonuclease Cas4. Cysteine 44 contributes to the [4Fe-4S] cluster binding site. Residues aspartate 112 and glutamate 125 each contribute to the Mn(2+) site. [4Fe-4S] cluster-binding residues include cysteine 212, cysteine 215, and cysteine 221. Residues 248–580 (LYGQTPGARI…IPRYPHYCPR (333 aa)) form a CRISPR-associated endonuclease Cas1 region. The Mn(2+) site is built by glutamate 401, histidine 472, and glutamate 487.

This sequence in the N-terminal section; belongs to the CRISPR-associated exonuclease Cas4 family. It in the C-terminal section; belongs to the CRISPR-associated endonuclease Cas1 family. As to quaternary structure, homodimer, forms a heterotetramer with a Cas2 homodimer. The cofactor is [4Fe-4S] cluster. Mg(2+) serves as cofactor. It depends on Mn(2+) as a cofactor.

The catalysed reaction is exonucleolytic cleavage in the 5'- to 3'-direction to yield nucleoside 3'-phosphates.. In terms of biological role, CRISPR (clustered regularly interspaced short palindromic repeat), is an adaptive immune system that provides protection against mobile genetic elements (viruses, transposable elements and conjugative plasmids). CRISPR clusters contain spacers, sequences complementary to antecedent mobile elements, and target invading nucleic acids. CRISPR clusters are transcribed and processed into CRISPR RNA (crRNA). The Cas4 region acts as a ssDNA exonuclease, while the Cas1 region acts as a dsDNA endonuclease. Involved in the integration of spacer DNA into the CRISPR cassette. The sequence is that of CRISPR-associated exonuclease Cas4/endonuclease Cas1 fusion (cas4-cas1) from Rhodospirillum rubrum (strain ATCC 11170 / ATH 1.1.1 / DSM 467 / LMG 4362 / NCIMB 8255 / S1).